The sequence spans 144 residues: Transcription antitermination protein NusB (144 aa).

The protein belongs to the NusB family.

Its function is as follows. Involved in transcription antitermination. Required for transcription of ribosomal RNA (rRNA) genes. Binds specifically to the boxA antiterminator sequence of the ribosomal RNA (rrn) operons. The protein is Transcription antitermination protein NusB of Histophilus somni (strain 129Pt) (Haemophilus somnus).